Here is a 305-residue protein sequence, read N- to C-terminus: Putative monooxygenase p33MONOX (305 aa).

Disordered stretches follow at residues 1–20 (MASR…LGKM) and 37–56 (LEDP…VPWK). Position 44 is a phosphothreonine (Thr-44). The Flavin-containing monooxygenase motif motif lies at 67-77 (LAKVEEGEASL). The segment at 159–305 (SGEITKEERQ…DLNVLTPTGF (147 aa)) is disordered. Residues 169–183 (PASAQSTPSTTPHSS) show a composition bias toward low complexity. At Thr-175 the chain carries Phosphothreonine. A phosphoserine mark is found at Ser-182 and Ser-183. Composition is skewed to polar residues over residues 191–210 (WFTS…TMDS) and 233–243 (KYDSGSSTTQA).

The protein belongs to the P33MONOX family. Interacts with NELFB, NOL12 and PRNP.

The protein localises to the cytoplasm. Potential NADPH-dependent oxidoreductase. May be involved in the regulation of neuronal survival, differentiation and axonal outgrowth. The polypeptide is Putative monooxygenase p33MONOX (P33MONOX) (Pongo abelii (Sumatran orangutan)).